A 31-amino-acid polypeptide reads, in one-letter code: uncharacterized protein (31 aa).

Residues 7–29 (TVVLINFFAAVGLFTLISMRFGW) form a helical membrane-spanning segment.

Its subcellular location is the cell inner membrane. This is an uncharacterized protein from Escherichia coli (strain K12).